The sequence spans 952 residues: Protein translocase subunit SecA (952 aa).

ATP is bound by residues Q135, 153–157, and D575; that span reads GEGKT. Residues 916-930 are compositionally biased toward low complexity; it reads VSAKAATQPAAPAAK. The disordered stretch occupies residues 916 to 952; sequence VSAKAATQPAAPAAKEVGRNDPCPCGSGKKYKKCCGK. C938, C940, C949, and C950 together coordinate Zn(2+).

The protein belongs to the SecA family. In terms of assembly, monomer and homodimer. Part of the essential Sec protein translocation apparatus which comprises SecA, SecYEG and auxiliary proteins SecDF. Other proteins may also be involved. Zn(2+) is required as a cofactor.

It localises to the cell membrane. Its subcellular location is the cytoplasm. The catalysed reaction is ATP + H2O + cellular proteinSide 1 = ADP + phosphate + cellular proteinSide 2.. Functionally, part of the Sec protein translocase complex. Interacts with the SecYEG preprotein conducting channel. Has a central role in coupling the hydrolysis of ATP to the transfer of proteins into and across the cell membrane, serving as an ATP-driven molecular motor driving the stepwise translocation of polypeptide chains across the membrane. The sequence is that of Protein translocase subunit SecA from Dehalococcoides mccartyi (strain ATCC BAA-2266 / KCTC 15142 / 195) (Dehalococcoides ethenogenes (strain 195)).